Here is a 1019-residue protein sequence, read N- to C-terminus: Vacuolar membrane protease (1019 aa).

Residues 1–69 are Cytoplasmic-facing; the sequence is MFLEINFYST…DRIPTVVGFR (69 aa). The helical transmembrane segment at 70-90 threads the bilayer; that stretch reads VIPTTVLVLLTYLTIFTLVIV. Topologically, residues 91–404 are vacuolar; it reads TDWLPEPPKN…AELVIFYLND (314 aa). N158 carries an N-linked (GlcNAc...) asparagine glycan. H195 and D207 together coordinate Zn(2+). The active-site Proton acceptor is E239. E240 is a Zn(2+) binding site. The N-linked (GlcNAc...) asparagine glycan is linked to N256. The Zn(2+) site is built by E265 and H341. The helical transmembrane segment at 405–425 threads the bilayer; it reads LLIYNVVSLVVGPISLIFFVV. Residues 426-466 lie on the Cytoplasmic side of the membrane; it reads CEYVLRNERARQPNGHPVSRPSVLEWLKQRSWLRALWRRSK. The helical transmembrane segment at 467 to 487 threads the bilayer; the sequence is FWIALVITIALQALLVWGYLA. At 488-497 the chain is on the vacuolar side; the sequence is FNSFTVYSSP. The helical transmembrane segment at 498-518 threads the bilayer; sequence YLVLISFFSLAYLSLVIPLTF. Topologically, residues 519–539 are cytoplasmic; sequence TFNQTQSPTAKYIAPEREKHT. The helical transmembrane segment at 540–560 threads the bilayer; the sequence is LLIQVYIFTWILLLFSTIAVA. Over 561-565 the chain is Vacuolar; sequence RAQVG. Residues 566–586 form a helical membrane-spanning segment; sequence GLYFVTAWNTGVWIACLLAAV. The Cytoplasmic segment spans residues 587 to 651; the sequence is EGMMLPVPQG…ASLRKPQEGG (65 aa). The segment at 603–634 is disordered; sequence HSAHHHHHHEHEEDQDADDDDREQRQPPTEAT. Residues 652 to 672 traverse the membrane as a helical segment; sequence VVGWWIVHLLLTIPAPVLLIA. Residues 673 to 692 lie on the Vacuolar side of the membrane; that stretch reads QMGSLLLDSLPQTLADGSPA. The chain crosses the membrane as a helical span at residues 693 to 713; the sequence is YVVYAAASLTAVLLAVPLTPF. Residues 714–719 lie on the Cytoplasmic side of the membrane; it reads SGKLHR. The helical transmembrane segment at 720–740 threads the bilayer; the sequence is GLFFLFFLSFLIVTAYLWLAF. Over 741–1019 the chain is Vacuolar; it reads PFSSADPLKV…LVEAWSPFSV (279 aa). N774 carries N-linked (GlcNAc...) asparagine glycosylation.

It belongs to the peptidase M28 family. The cofactor is Zn(2+).

Its subcellular location is the vacuole membrane. In terms of biological role, may be involved in vacuolar sorting and osmoregulation. The polypeptide is Vacuolar membrane protease (Laccaria bicolor (strain S238N-H82 / ATCC MYA-4686) (Bicoloured deceiver)).